A 1350-amino-acid chain; its full sequence is Tectonin beta-propeller repeat-containing protein (1350 aa).

TECPR repeat units lie at residues 23-59 (GAWRELPYLGLEFKKICAVPNFLWAIGGDRQVYVHVH), 233-271 (LRWTAVPTPTGSELAQISVGPTGLVWAVLHNGRVIVRTG), 280-320 (DSWL…FRRG), and 336-371 (KGWVEMVGNISMVSVAANDQVFAIGAADRCLYHRSG). Residues 396 to 415 (SSLSIVSRKSGGSSSTPGSK) show a composition bias toward low complexity. 2 disordered regions span residues 396 to 420 (SSLSIVSRKSGGSSSTPGSKHQSFS) and 671 to 691 (SGSGTDTNSSENSRSGDSGTF). A Galectin domain is found at 816–955 (YYNTLYNGMP…RIKLFNVLYR (140 aa)). TECPR repeat units lie at residues 966 to 1000 (MHWRQMGGHIKRIFNSGVDVVWGISCDNTGWVYNG), 1187 to 1223 (DAWEHITSDQPLVGISVGPTGQVWTVARNGMVFFRYG), 1232 to 1269 (DAWQQVEAPAGVTFKAISVGRAGIWALDNQQRLAVRKE), and 1278 to 1322 (SHWQ…RRCG).

This sequence belongs to the TECPR1 family.

Its function is as follows. Involved in peroxisome biogenesis. This chain is Tectonin beta-propeller repeat-containing protein (Pex23), found in Drosophila melanogaster (Fruit fly).